Reading from the N-terminus, the 168-residue chain is Transcriptional regulator MraZ (168 aa).

2 consecutive SpoVT-AbrB domains span residues Glu-8–Arg-51 and Ala-90–Ile-140.

It belongs to the MraZ family. Forms oligomers.

It is found in the cytoplasm. The protein localises to the nucleoid. The protein is Transcriptional regulator MraZ of Cereibacter sphaeroides (strain KD131 / KCTC 12085) (Rhodobacter sphaeroides).